The following is a 62-amino-acid chain: Large ribosomal subunit protein bL28 (62 aa).

A disordered region spans residues 1–28; the sequence is MARKCVITGRKSRSGNSRSHAMNASKRT. The segment covering 14–26 has biased composition (polar residues); it reads SGNSRSHAMNASK.

The protein belongs to the bacterial ribosomal protein bL28 family.

This is Large ribosomal subunit protein bL28 from Bacillus licheniformis (strain ATCC 14580 / DSM 13 / JCM 2505 / CCUG 7422 / NBRC 12200 / NCIMB 9375 / NCTC 10341 / NRRL NRS-1264 / Gibson 46).